Reading from the N-terminus, the 505-residue chain is T-cell activation GTPase-activating protein 1 (505 aa).

Disordered stretches follow at residues 81-147 (DDSL…SESS), 160-212 (QQDR…DPFT), 242-293 (QGHI…QREI), 311-339 (RTSSIGSEKSKDFSRDQLQKDLRKESQLS), and 414-441 (KPSTAVPPVPSHHGGDLSEGTPGGHRLS). Residues 90 to 102 (SDVSTLQNDSAYD) show a composition bias toward polar residues. Acidic residues predominate over residues 203 to 212 (EGDEAEDPFT). Residues 250–262 (SRSSPGESLGSSP) show a composition bias toward low complexity. Basic and acidic residues-rich tracts occupy residues 283-292 (KTDKTKPQRE) and 318-336 (EKSKDFSRDQLQKDLRKES).

The chain is T-cell activation GTPase-activating protein 1 (Tagap1) from Mus musculus (Mouse).